Consider the following 498-residue polypeptide: ATP synthase subunit beta, chloroplastic (498 aa).

Residue 172 to 179 (GGAGVGKT) coordinates ATP.

It belongs to the ATPase alpha/beta chains family. In terms of assembly, F-type ATPases have 2 components, CF(1) - the catalytic core - and CF(0) - the membrane proton channel. CF(1) has five subunits: alpha(3), beta(3), gamma(1), delta(1), epsilon(1). CF(0) has four main subunits: a(1), b(1), b'(1) and c(9-12).

It localises to the plastid. Its subcellular location is the chloroplast thylakoid membrane. The catalysed reaction is ATP + H2O + 4 H(+)(in) = ADP + phosphate + 5 H(+)(out). Produces ATP from ADP in the presence of a proton gradient across the membrane. The catalytic sites are hosted primarily by the beta subunits. The protein is ATP synthase subunit beta, chloroplastic of Gossypium hirsutum (Upland cotton).